Reading from the N-terminus, the 366-residue chain is 3-isopropylmalate dehydrogenase (366 aa).

Residue 76-89 (GPKWDANPSHLRPE) coordinates NAD(+). Residues Arg-96, Arg-106, Arg-134, and Asp-219 each contribute to the substrate site. Mg(2+) contacts are provided by Asp-219, Asp-243, and Asp-247. Position 277 to 289 (277 to 289 (GSAPDIAGKGIAN)) interacts with NAD(+).

It belongs to the isocitrate and isopropylmalate dehydrogenases family. LeuB type 1 subfamily. In terms of assembly, homodimer. The cofactor is Mg(2+). Mn(2+) is required as a cofactor.

The protein resides in the cytoplasm. The catalysed reaction is (2R,3S)-3-isopropylmalate + NAD(+) = 4-methyl-2-oxopentanoate + CO2 + NADH. It participates in amino-acid biosynthesis; L-leucine biosynthesis; L-leucine from 3-methyl-2-oxobutanoate: step 3/4. Catalyzes the oxidation of 3-carboxy-2-hydroxy-4-methylpentanoate (3-isopropylmalate) to 3-carboxy-4-methyl-2-oxopentanoate. The product decarboxylates to 4-methyl-2 oxopentanoate. The polypeptide is 3-isopropylmalate dehydrogenase (Oceanobacillus iheyensis (strain DSM 14371 / CIP 107618 / JCM 11309 / KCTC 3954 / HTE831)).